The sequence spans 510 residues: Bifunctional purine biosynthesis protein PurH (510 aa).

One can recognise an MGS-like domain in the interval 1–142; sequence MRALLSVSDK…KNYKDVMVLC (142 aa).

Belongs to the PurH family.

The enzyme catalyses (6R)-10-formyltetrahydrofolate + 5-amino-1-(5-phospho-beta-D-ribosyl)imidazole-4-carboxamide = 5-formamido-1-(5-phospho-D-ribosyl)imidazole-4-carboxamide + (6S)-5,6,7,8-tetrahydrofolate. The catalysed reaction is IMP + H2O = 5-formamido-1-(5-phospho-D-ribosyl)imidazole-4-carboxamide. It functions in the pathway purine metabolism; IMP biosynthesis via de novo pathway; 5-formamido-1-(5-phospho-D-ribosyl)imidazole-4-carboxamide from 5-amino-1-(5-phospho-D-ribosyl)imidazole-4-carboxamide (10-formyl THF route): step 1/1. It participates in purine metabolism; IMP biosynthesis via de novo pathway; IMP from 5-formamido-1-(5-phospho-D-ribosyl)imidazole-4-carboxamide: step 1/1. This is Bifunctional purine biosynthesis protein PurH from Campylobacter jejuni (strain RM1221).